The primary structure comprises 118 residues: Transcription factor PAR1 (118 aa).

Positions 1–58 (MEETLATPDATRRSLSPSCSATVKSRAAGFERRTKRRLSETNASVREDREEAEEEEDE) are disordered. The segment covering 13 to 23 (RSLSPSCSATV) has biased composition (polar residues). One can recognise a bHLH domain in the interval 43–92 (ASVREDREEAEEEEDEVKEKIEALQRIIPGGAALGVDALFEETAGYILSL).

This sequence belongs to the bHLH protein family. As to quaternary structure, homodimer.

It localises to the nucleus. Its function is as follows. Atypical bHLH transcription factor that acts as a negative regulator of a variety of shade avoidance syndrome (SAS) responses, including seedling elongation and photosynthetic pigment accumulation. Acts as a direct transcriptional repressor of two auxin-responsive genes, SAUR15 and SAUR68. May function in integrating shade and hormone transcriptional networks in response to light and auxin changes. The chain is Transcription factor PAR1 (PAR1) from Arabidopsis thaliana (Mouse-ear cress).